Here is a 229-residue protein sequence, read N- to C-terminus: MVEMSNVRKEIVAFIVLLSLLLLWTLFTQAPINTSTPVNTSTPVNTSTPVNTSTPVNTSTPVSTSTIDPESQVAGMAIQFKNGTSESEVKSTLQNYNMTQNYRITFDANHYPEYYIMVNKENITDVKGKLEKEKTWTEPIPAIEKGNYYIITISERVIHNKNFIMMLSKYNLQLEKFVWCDIRFLYSDGPLTYWISKEDAIRLKNELEQNENIFTIRFDYLYPPYDPTT.

The segment covering 35-66 (STPVNTSTPVNTSTPVNTSTPVNTSTPVSTST) has biased composition (low complexity). A disordered region spans residues 35-67 (STPVNTSTPVNTSTPVNTSTPVNTSTPVSTSTI).

This sequence belongs to the UPF0228 family.

In Methanosarcina acetivorans (strain ATCC 35395 / DSM 2834 / JCM 12185 / C2A), this protein is UPF0228 protein MA_3119.